The sequence spans 1463 residues: DNA polymerase III PolC-type (1463 aa).

In terms of domain architecture, Exonuclease spans 425–581; that stretch reads YVVFDVETTG…YDAEATGRLL (157 aa).

Belongs to the DNA polymerase type-C family. PolC subfamily.

The protein resides in the cytoplasm. It catalyses the reaction DNA(n) + a 2'-deoxyribonucleoside 5'-triphosphate = DNA(n+1) + diphosphate. In terms of biological role, required for replicative DNA synthesis. This DNA polymerase also exhibits 3' to 5' exonuclease activity. This Streptococcus pneumoniae serotype 4 (strain ATCC BAA-334 / TIGR4) protein is DNA polymerase III PolC-type.